A 633-amino-acid polypeptide reads, in one-letter code: Probable alkaline/neutral invertase A, chloroplastic (633 aa).

The N-terminal 71 residues, 1 to 71 (MNAITFLGNS…TNAVPFCTDR (71 aa)), are a transit peptide targeting the chloroplast. A Phosphoserine modification is found at Ser623.

It belongs to the glycosyl hydrolase 100 family. As to expression, expressed in flowers.

Its subcellular location is the plastid. It is found in the chloroplast. It carries out the reaction Hydrolysis of terminal non-reducing beta-D-fructofuranoside residues in beta-D-fructofuranosides.. Functionally, chloroplastic invertase that cleaves sucrose into glucose and fructose and may participate in the carbon flux between the cytosol and plastids in leaves. This chain is Probable alkaline/neutral invertase A, chloroplastic, found in Arabidopsis thaliana (Mouse-ear cress).